The following is a 402-amino-acid chain: Serine--glyoxylate aminotransferase (402 aa).

Lys-201 carries the N6-(pyridoxal phosphate)lysine modification.

It belongs to the class-V pyridoxal-phosphate-dependent aminotransferase family. The cofactor is pyridoxal 5'-phosphate.

The catalysed reaction is glyoxylate + L-serine = 3-hydroxypyruvate + glycine. It functions in the pathway one-carbon metabolism; formaldehyde assimilation via serine pathway. The chain is Serine--glyoxylate aminotransferase from Methylorubrum extorquens (strain ATCC 14718 / DSM 1338 / JCM 2805 / NCIMB 9133 / AM1) (Methylobacterium extorquens).